A 587-amino-acid chain; its full sequence is Arginine--tRNA ligase (587 aa).

The short motif at 127-137 (PNLAKEMHVGH) is the 'HIGH' region element.

Belongs to the class-I aminoacyl-tRNA synthetase family. In terms of assembly, monomer.

Its subcellular location is the cytoplasm. It catalyses the reaction tRNA(Arg) + L-arginine + ATP = L-arginyl-tRNA(Arg) + AMP + diphosphate. The chain is Arginine--tRNA ligase from Pseudomonas paraeruginosa (strain DSM 24068 / PA7) (Pseudomonas aeruginosa (strain PA7)).